Reading from the N-terminus, the 237-residue chain is Lycopene beta-cyclase (237 aa).

The next 7 helical transmembrane spans lie at 3-23 (TSYL…LGVV), 38-58 (VGIL…YLIA), 80-100 (EYLF…ALPL), 113-133 (AVLG…LLTV), 137-157 (FYIG…WAVG), 170-192 (AAVL…DGIW), and 213-233 (AFFF…AWVL).

Belongs to the lycopene beta-cyclase family.

It is found in the cell membrane. It carries out the reaction a carotenoid psi-end group = a carotenoid beta-end derivative. The catalysed reaction is all-trans-lycopene = gamma-carotene. The enzyme catalyses gamma-carotene = all-trans-beta-carotene. It functions in the pathway carotenoid biosynthesis; beta-carotene biosynthesis. Functionally, catalyzes the cyclization of both ends of lycopene to form beta-carotene, a retinal precursor. Is required for bacteriorhodopsin biogenesis, a light-driven proton pump with a covalently bound retinal cofactor. The sequence is that of Lycopene beta-cyclase from Halobacterium salinarum (strain ATCC 29341 / DSM 671 / R1).